Reading from the N-terminus, the 1234-residue chain is Anion exchange protein 2 (1234 aa).

Residues 1 to 239 (MSSAPRRPAS…YNLQERRRIG (239 aa)) form a disordered region. Topologically, residues 1–704 (MSSAPRRPAS…SDFRDALDPQ (704 aa)) are cytoplasmic. Basic and acidic residues-rich tracts occupy residues 39-49 (LRTLGVERFEE) and 58-75 (GGEE…EYHR). 2 stretches are compositionally biased toward basic residues: residues 76-85 (QSSHHIHHPL) and 94-110 (RRRK…RRRP). A Phosphoserine modification is found at Ser-113. The segment covering 120–133 (TIEEGEEDEDEVGE) has biased composition (acidic residues). 3 positions are modified to phosphoserine: Ser-145, Ser-171, and Ser-173. Over residues 207–216 (TAGGDDGGAA) the composition is skewed to gly residues. Residue Ser-240 is modified to Phosphoserine. Phosphothreonine is present on Thr-254. At Lys-271 the chain carries N6-methyllysine. The tract at residues 287–315 (RKNAKGSTQAAREGREPGPTPRARPRAPH) is disordered. Ser-440 carries the post-translational modification Phosphoserine. The segment at 446–467 (SLLGHHHAQGTESDPHVTEPLI) is disordered. The next 4 membrane-spanning stretches (helical) occupy residues 705–728 (CLAA…GLLG), 734–771 (LIGV…LLVF), 791–813 (VWIG…SFLV), and 823–843 (IFAF…LIKI). Residues 705–1234 (CLAAVIFIYF…DEYNEMPMPV (530 aa)) form a membrane (anion exchange) region. Topologically, residues 844-893 (FQEHPLHGCSVSNDSEADSSSNNMTWAATTLAPDNSSASGQERPRGQPNT) are extracellular. Residues Asn-856, Asn-866, and Asn-878 are each glycosylated (N-linked (GlcNAc...) asparagine). A helical membrane pass occupies residues 894–911 (ALLSLVLMAGTFFIAFFL). Over 912–926 (RKFKNSRFFPGRIRR) the chain is Cytoplasmic. Transmembrane regions (helical) follow at residues 927–947 (VIGD…DYSI), 981–1003 (PFPV…LIFM), 1029–1050 (LLLI…LAAA), 1084–1129 (VTGL…IQFY), and 1156–1192 (MHLF…TVPL). Cys-1166 is lipidated: S-palmitoyl cysteine.

Belongs to the anion exchanger (TC 2.A.31) family. Expressed in the parotid and submandibular glands (at protein level). Expressed in the gastric mucosa (at protein level). Expressed in the choroid plexus epithelium (at protein level). Expressed in the liver and gallbladder.

Its subcellular location is the apical cell membrane. The protein localises to the basolateral cell membrane. It carries out the reaction hydrogencarbonate(in) + chloride(out) = hydrogencarbonate(out) + chloride(in). Inhibited by 4,4'-diisothiocyanatostilbene-2,2'-disulfonic acid (DIDS). Its function is as follows. Sodium-independent anion exchanger which mediates the electroneutral exchange of chloride for bicarbonate ions across the cell membrane. Plays an important role in osteoclast differentiation and function. Regulates bone resorption and calpain-dependent actin cytoskeleton organization in osteoclasts via anion exchange-dependent control of pH. Essential for intracellular pH regulation in CD8(+) T-cells upon CD3 stimulation, modulating CD8(+) T-cell responses. The protein is Anion exchange protein 2 (Slc4a2) of Rattus norvegicus (Rat).